A 197-amino-acid polypeptide reads, in one-letter code: Phosphoheptose isomerase (197 aa).

Residues 37 to 197 enclose the SIS domain; sequence MLQCLMNDGK…CIDSVLLEGM (161 aa). Residue 52 to 54 participates in substrate binding; it reads NGG. Zn(2+) contacts are provided by histidine 61 and glutamate 65. Residues glutamate 65, 94–95, 120–122, serine 125, and glutamine 175 contribute to the substrate site; these read ND and STS. Zn(2+)-binding residues include glutamine 175 and histidine 183.

Belongs to the SIS family. GmhA subfamily. As to quaternary structure, homotetramer. Zn(2+) serves as cofactor.

It is found in the cytoplasm. The catalysed reaction is 2 D-sedoheptulose 7-phosphate = D-glycero-alpha-D-manno-heptose 7-phosphate + D-glycero-beta-D-manno-heptose 7-phosphate. The protein operates within carbohydrate biosynthesis; D-glycero-D-manno-heptose 7-phosphate biosynthesis; D-glycero-alpha-D-manno-heptose 7-phosphate and D-glycero-beta-D-manno-heptose 7-phosphate from sedoheptulose 7-phosphate: step 1/1. It functions in the pathway bacterial outer membrane biogenesis; LOS core biosynthesis. In terms of biological role, catalyzes the isomerization of sedoheptulose 7-phosphate in D-glycero-D-manno-heptose 7-phosphate. In Neisseria meningitidis serogroup A / serotype 4A (strain DSM 15465 / Z2491), this protein is Phosphoheptose isomerase.